The sequence spans 545 residues: MNPSTTQARVVVDELIRGGVRDVVLCPGSRNAPLAFALADADRAGRIRLHVRIDERTAGYLAIGLAIAAGAPVCVAMTSGTAVANLGPAVVEANYARVPLIVLSANRPYELLGTGANQTMEQLGYFGTQVRAAISLGLAEDAPERLDALNATWRSATCRVLAAATGSRTANAGPVQFDIPLREPLVPDPEPHGAPTPAGRPGGRPWTYTPPVSFDQPLDIDLSPDTVVIAGHGAGTHPNLAQLPTVAEPTAPAPDNPLHPLALRLLRPKQVIMLGRPTLHRPVSALLADPQVPVYALTTGPRWPDVSGNSQATGTRAVTTGAPSPAWLHRCEQANRHAVAAVRGQLAAHPLTTGLHVAAAVADALRPGDQLVLGASNPVRDAALVGLDSHHIRVRSNRGVAGIDGTVSTAIGAALAHEAAHDGRTVALIGDLTFVHDSSGLLIGPTEPTPRRLTIVVSNDNGGGIFELLEQGDPRFSDVSSRVFGTPHDVDVGALCRAYHVESAQIEVGELAAALDEPGPGMRVLEVKADRSSLRQLHAAIKAAL.

Residues 184–209 (PLVPDPEPHGAPTPAGRPGGRPWTYT) are disordered. Positions 195–205 (PTPAGRPGGRP) are enriched in low complexity.

The protein belongs to the TPP enzyme family. MenD subfamily. As to quaternary structure, homodimer. The cofactor is Mg(2+). Requires Mn(2+) as cofactor. Thiamine diphosphate is required as a cofactor.

The enzyme catalyses isochorismate + 2-oxoglutarate + H(+) = 5-enolpyruvoyl-6-hydroxy-2-succinyl-cyclohex-3-ene-1-carboxylate + CO2. It participates in quinol/quinone metabolism; 1,4-dihydroxy-2-naphthoate biosynthesis; 1,4-dihydroxy-2-naphthoate from chorismate: step 2/7. The protein operates within quinol/quinone metabolism; menaquinone biosynthesis. In terms of biological role, catalyzes the thiamine diphosphate-dependent decarboxylation of 2-oxoglutarate and the subsequent addition of the resulting succinic semialdehyde-thiamine pyrophosphate anion to isochorismate to yield 2-succinyl-5-enolpyruvyl-6-hydroxy-3-cyclohexene-1-carboxylate (SEPHCHC). This is 2-succinyl-5-enolpyruvyl-6-hydroxy-3-cyclohexene-1-carboxylate synthase from Mycobacterium avium (strain 104).